A 177-amino-acid polypeptide reads, in one-letter code: R-phycoerythrin beta chain (177 aa).

Phycourobilin contacts are provided by cysteine 50 and cysteine 61. The residue at position 72 (asparagine 72) is an N4-methylasparagine. Positions 82 and 158 each coordinate (2R,3E)-phycoerythrobilin.

This sequence belongs to the phycobiliprotein family. In terms of assembly, heterodimer of an alpha and a beta chain. Post-translationally, contains two covalently linked phycoerythrobilin chromophores and one covalently linked phycourobilin chromophore.

It localises to the plastid. The protein localises to the chloroplast thylakoid membrane. In terms of biological role, light-harvesting photosynthetic bile pigment-protein from the phycobiliprotein complex. The sequence is that of R-phycoerythrin beta chain (cpeB) from Pyropia haitanensis (Red seaweed).